The following is a 431-amino-acid chain: Histidinol dehydrogenase (431 aa).

NAD(+) is bound by residues Y127, Q189, and N212. S237, Q259, and H262 together coordinate substrate. Q259 and H262 together coordinate Zn(2+). Residues E326 and H327 each act as proton acceptor in the active site. Residues H327, D360, E414, and H419 each coordinate substrate. Position 360 (D360) interacts with Zn(2+). Residue H419 coordinates Zn(2+).

The protein belongs to the histidinol dehydrogenase family. The cofactor is Zn(2+).

It catalyses the reaction L-histidinol + 2 NAD(+) + H2O = L-histidine + 2 NADH + 3 H(+). Its pathway is amino-acid biosynthesis; L-histidine biosynthesis; L-histidine from 5-phospho-alpha-D-ribose 1-diphosphate: step 9/9. In terms of biological role, catalyzes the sequential NAD-dependent oxidations of L-histidinol to L-histidinaldehyde and then to L-histidine. The protein is Histidinol dehydrogenase of Xanthomonas axonopodis pv. citri (strain 306).